We begin with the raw amino-acid sequence, 1007 residues long: Retinoblastoma-related protein (1007 aa).

A domain A region spans residues 406–604 (TPVTTAMTTA…EKGSSMYNSL (199 aa)). Positions 406-856 (TPVTTAMTTA…NEIFIPAVKP (451 aa)) are pocket. Residues 605–725 (IVARAALSAE…PGREGETCAE (121 aa)) form a spacer region. A disordered region spans residues 644 to 665 (PVPSLQKRESSPGQNGDIRSPK). The tract at residues 726-856 (TGINIFFSKI…NEIFIPAVKP (131 aa)) is domain B.

The protein belongs to the retinoblastoma protein (RB) family.

The protein resides in the nucleus. In terms of biological role, regulator of biological processes that recruits a histone deacetylase to control gene transcription. May play a role in the entry into mitosis, negatively regulating the cell proliferation. Formation of stable complexes with geminiviridae replication-associated proteins may create a cellular environment which favors viral DNA replication. The sequence is that of Retinoblastoma-related protein (RBR) from Vitis vinifera (Grape).